A 291-amino-acid chain; its full sequence is tRNA-cytidine(32) 2-sulfurtransferase (291 aa).

The PP-loop motif motif lies at 36–41; that stretch reads SGGKDS. C111, C114, and C202 together coordinate [4Fe-4S] cluster. The disordered stretch occupies residues 258–291; it reads RDPWLDAEDEEAEDCGEPPAGDGVVSLGGARGGR. Over residues 262–273 the composition is skewed to acidic residues; it reads LDAEDEEAEDCG.

This sequence belongs to the TtcA family. In terms of assembly, homodimer. Requires Mg(2+) as cofactor. [4Fe-4S] cluster serves as cofactor.

The protein resides in the cytoplasm. The catalysed reaction is cytidine(32) in tRNA + S-sulfanyl-L-cysteinyl-[cysteine desulfurase] + AH2 + ATP = 2-thiocytidine(32) in tRNA + L-cysteinyl-[cysteine desulfurase] + A + AMP + diphosphate + H(+). The protein operates within tRNA modification. Catalyzes the ATP-dependent 2-thiolation of cytidine in position 32 of tRNA, to form 2-thiocytidine (s(2)C32). The sulfur atoms are provided by the cysteine/cysteine desulfurase (IscS) system. This chain is tRNA-cytidine(32) 2-sulfurtransferase, found in Anaeromyxobacter dehalogenans (strain 2CP-1 / ATCC BAA-258).